The chain runs to 865 residues: Probable beta-glucosidase J (865 aa).

Residue D233 is part of the active site. N330, N447, N503, and N764 each carry an N-linked (GlcNAc...) asparagine glycan. In terms of domain architecture, PA14 spans 411–579; sequence TGQPGYTFRV…DTDTAIQQAV (169 aa).

This sequence belongs to the glycosyl hydrolase 3 family.

The protein resides in the secreted. The enzyme catalyses Hydrolysis of terminal, non-reducing beta-D-glucosyl residues with release of beta-D-glucose.. The protein operates within glycan metabolism; cellulose degradation. Beta-glucosidases are one of a number of cellulolytic enzymes involved in the degradation of cellulosic biomass. Catalyzes the last step releasing glucose from the inhibitory cellobiose. The polypeptide is Probable beta-glucosidase J (bglJ) (Aspergillus fumigatus (strain ATCC MYA-4609 / CBS 101355 / FGSC A1100 / Af293) (Neosartorya fumigata)).